A 474-amino-acid chain; its full sequence is Trichothecene 3-O-acetyltransferase (474 aa).

It belongs to the trichothecene 3-O-acetyltransferase family.

In terms of biological role, trichothecene 3-O-acetyltransferase involved in self-protection against trichothecenes, mycotoxins acting as eukaryotic protein synthesis inhibitors. Its existence is surprising in a non-trichothecene producer organism which needs no self-protection again endogenic trichothecenes. The persistence of this non-essential gene may be due to a selective advantage that it may confer, like a resistance to exogenic trichothecenes. The polypeptide is Trichothecene 3-O-acetyltransferase (AYT1) (Saccharomyces cerevisiae (strain ATCC 204508 / S288c) (Baker's yeast)).